The chain runs to 131 residues: Profilin-1 (131 aa).

This sequence belongs to the profilin family. In terms of assembly, occurs in many kinds of cells as a complex with monomeric actin in a 1:1 ratio. In terms of tissue distribution, cytoplasmic distribution in hypocotyls. In root nodules, it is found in all cells, but is more abundant in the vascular tissue as well as the endodermis.

It localises to the cytoplasm. Its subcellular location is the cytoskeleton. In terms of biological role, binds to actin and affects the structure of the cytoskeleton. At high concentrations, profilin prevents the polymerization of actin, whereas it enhances it at low concentrations. By binding to PIP2, it inhibits the formation of IP3 and DG. The protein is Profilin-1 of Phaseolus vulgaris (Kidney bean).